The sequence spans 90 residues: Large ribosomal subunit protein bL27 (90 aa).

Low complexity predominate over residues Met1–Gly13. A disordered region spans residues Met1–Arg20.

Belongs to the bacterial ribosomal protein bL27 family.

The sequence is that of Large ribosomal subunit protein bL27 from Anaplasma marginale (strain Florida).